Consider the following 151-residue polypeptide: Ribosome maturation factor RimP (151 aa).

The protein belongs to the RimP family.

It localises to the cytoplasm. Its function is as follows. Required for maturation of 30S ribosomal subunits. The chain is Ribosome maturation factor RimP from Pseudoalteromonas translucida (strain TAC 125).